The sequence spans 319 residues: High mobility group B protein 10 (319 aa).

Over residues 1 to 13 (MSTDISPPYSQTH) the composition is skewed to polar residues. The interval 1 to 25 (MSTDISPPYSQTHVEPVNGYPSDNK) is disordered. One can recognise an ARID domain in the interval 40–131 (VRNSALFWEK…FLFQLEHVYY (92 aa)). A compositionally biased stretch (polar residues) spans 203-220 (PSQSQQTMETPSAIVQSS). The disordered stretch occupies residues 203 to 230 (PSQSQQTMETPSAIVQSSQRRHRKKSKL). The segment at residues 238-305 (PKCHRSGYNF…RYRIEMLEYK (68 aa)) is a DNA-binding region (HMG box).

As to expression, ubiquitously expressed.

It is found in the nucleus. Binds preferentially DNA with A/T-rich content. The polypeptide is High mobility group B protein 10 (HMGB10) (Arabidopsis thaliana (Mouse-ear cress)).